The chain runs to 127 residues: Fluoride-specific ion channel FluC (127 aa).

4 consecutive transmembrane segments (helical) span residues 4 to 24 (LLLAVFIGGGTGSVARWLLSM), 35 to 55 (LGTLAANLIGAFIIGMGFAWF), 71 to 91 (TGFCGGLTTFSTFSAEVVFLL), and 103 to 123 (VFVNLLGSFAMTALAFWLFSA). Positions 75 and 78 each coordinate Na(+).

The protein belongs to the fluoride channel Fluc/FEX (TC 1.A.43) family.

It localises to the cell inner membrane. It catalyses the reaction fluoride(in) = fluoride(out). Na(+) is not transported, but it plays an essential structural role and its presence is essential for fluoride channel function. Functionally, fluoride-specific ion channel. Important for reducing fluoride concentration in the cell, thus reducing its toxicity. This Escherichia coli O8 (strain IAI1) protein is Fluoride-specific ion channel FluC.